The chain runs to 245 residues: 1-(5-phosphoribosyl)-5-[(5-phosphoribosylamino)methylideneamino] imidazole-4-carboxamide isomerase (245 aa).

The active-site Proton acceptor is the Asp7. Asp129 (proton donor) is an active-site residue.

The protein belongs to the HisA/HisF family.

Its subcellular location is the cytoplasm. It carries out the reaction 1-(5-phospho-beta-D-ribosyl)-5-[(5-phospho-beta-D-ribosylamino)methylideneamino]imidazole-4-carboxamide = 5-[(5-phospho-1-deoxy-D-ribulos-1-ylimino)methylamino]-1-(5-phospho-beta-D-ribosyl)imidazole-4-carboxamide. The protein operates within amino-acid biosynthesis; L-histidine biosynthesis; L-histidine from 5-phospho-alpha-D-ribose 1-diphosphate: step 4/9. The protein is 1-(5-phosphoribosyl)-5-[(5-phosphoribosylamino)methylideneamino] imidazole-4-carboxamide isomerase of Pectobacterium carotovorum subsp. carotovorum (strain PC1).